The chain runs to 330 residues: MGEYLTLPMEVYSGILVTHEGVFHGDLIVEEMAFEESRVEKDDFVISPTFFNAHTHLGDAALREAPRLDLVSIVGPGGYKHRMLSQIDSKTLRQEVELEVRISRDAGTSHFLDFREGGKAGLEIVKGIDGVLPLARPTSVEEAEEVEAFGFAYSSARDHDLKLMEEVREIARRRKMLFAIHAGEKDCADVDAALALEPDFVVHMNSCPEKIREFVEAEIPIVSCIRSNAFFGLLNKKSYELLSEYEKWMLGTDNAMISTASMLDEMHFAAYLIGKEKAILRAATASYAVFGFRHGYVVFNRNCSFRRTSDPLLTLVRRAGVKDIERVLIL.

The Zn(2+) site is built by His54, His56, His181, and Asp253.

Belongs to the metallo-dependent hydrolases superfamily. ATZ/TRZ family.

This chain is Putative aminohydrolase AF_1775, found in Archaeoglobus fulgidus (strain ATCC 49558 / DSM 4304 / JCM 9628 / NBRC 100126 / VC-16).